The sequence spans 247 residues: MPCCPTKSGAAPTNRNYELQGEMLKDIGGMQTYFTGKRSSKVVLIGFMDVFGLSKQIKEGADQLANHELAIYLPDFLNGETASIEMIDPKTIEQKEARSKFMEKISSPLHWPKLTKVIEDIERIHGQDVKIGAYGFCWGAKVLITYPNKERFLRIGCAHPSLLDPVDAKHVHCPVCFLCSKDEDPEEVDAWKKSFENSPYFSESYFETFGKMHHGWMAARANLSDPENRKYFDLGYQIFLKFFKELF.

Belongs to the AIM2 family.

The protein localises to the cytoplasm. It localises to the nucleus. This is an uncharacterized protein from Schizosaccharomyces pombe (strain 972 / ATCC 24843) (Fission yeast).